The primary structure comprises 1091 residues: Sodium/potassium exporting P-type ATPase 1 (1091 aa).

The Cytoplasmic segment spans residues 1–63 (MGEGTTKENN…LGDDTKIDYK (63 aa)). A helical transmembrane segment spans residues 64 to 84 (AMVLHQVCNAMIMVLLISMII). Topologically, residues 85–90 (SFAMHD) are extracellular. A helical membrane pass occupies residues 91-111 (WITGGVISFVIAVNVLIGLVQ). Residues 112–282 (EYKATKTMNS…TNVGTPLHRK (171 aa)) lie on the Cytoplasmic side of the membrane. A helical membrane pass occupies residues 283–303 (LSKLAVLLFWIAVLFAIIVMA). Residues 304–312 (SQKFDVDKR) are Extracellular-facing. The helical transmembrane segment at 313–333 (VAIYAICVALSMIPSSLVVVL) threads the bilayer. Residues 334–815 (TITMSVGAAV…RRMTDNIQKF (482 aa)) are Cytoplasmic-facing. D369 functions as the 4-aspartylphosphate intermediate in the catalytic mechanism. Mg(2+) is bound by residues D369 and T371. ATP is bound by residues T371 and E483. Residues 499 to 525 (ALTGEKSTNQSNENDQSSLSQHNEKPG) are disordered. Residues 503–519 (EKSTNQSNENDQSSLSQ) are compositionally biased toward polar residues. ATP contacts are provided by K561, R606, T673, G674, D675, R732, and K738. D757 is a binding site for Mg(2+). Residue N760 coordinates ATP. The helical transmembrane segment at 816-836 (VLQLLAENVAQALYLIIGLVF) threads the bilayer. Residues 837–848 (RDENGKSVFPLS) lie on the Extracellular side of the membrane. Residues 849 to 869 (PVEVLWIIVVTSCFPAMGLGL) traverse the membrane as a helical segment. The Cytoplasmic portion of the chain corresponds to 870–885 (EKAAPDLMDRPPHDSE). A helical transmembrane segment spans residues 886–906 (VGIFTWEVIIDTFAYGIIMTG). Residues 907–943 (SCMASFTGSLYGINSGRLGHDCDGTYNSSCRDVYRSR) are Extracellular-facing. The chain crosses the membrane as a helical span at residues 944–964 (SAAFATMTWCALILAWEVVDM). Residues 965 to 991 (RRSFFRMHPDTDSPVKEFFRSIWGNQF) lie on the Cytoplasmic side of the membrane. Residues 992 to 1012 (LFWSIIFGFVSAFPVVYIPVI) traverse the membrane as a helical segment. Residues 1013 to 1021 (NDKVFLHKP) lie on the Extracellular side of the membrane. The helical transmembrane segment at 1022–1042 (IGAEWGLAIAFTIAFWIGAEL) threads the bilayer. Residues 1043-1091 (YKCGKRRYFKTQRAHNPENDLESNNKRDPFEAYSTSTTIHTEVNIGIKQ) lie on the Cytoplasmic side of the membrane.

Belongs to the cation transport ATPase (P-type) (TC 3.A.3) family. Type IID subfamily. It depends on Mg(2+) as a cofactor. Post-translationally, the active site is phosphorylated in presence of sodium or potassium and in conditions of higher pH. Not phosphorylated in presence of calcium ions.

It is found in the cell membrane. The enzyme catalyses Na(+)(in) + ATP + H2O = Na(+)(out) + ADP + phosphate + H(+). It catalyses the reaction K(+)(in) + ATP + H2O = K(+)(out) + ADP + phosphate + H(+). Functionally, catalyzes the hydrolysis of ATP coupled with the export of sodium and potassium from the cell. May export potassium less efficiently. May transport other cations such as lithium. Sodium/potassium efflux ATPases are involved in salt tolerance and maintaining the membrane potential across the plasma membrane in high salinity (Na+) or alkaline (K+) environments. Is negatively modulated by SIS2/HAL3. In Saccharomyces cerevisiae (strain ATCC 204508 / S288c) (Baker's yeast), this protein is Sodium/potassium exporting P-type ATPase 1.